The chain runs to 251 residues: Ubiquinone/menaquinone biosynthesis C-methyltransferase UbiE (251 aa).

Residues Thr74, Asp95, and 123–124 (NA) contribute to the S-adenosyl-L-methionine site.

It belongs to the class I-like SAM-binding methyltransferase superfamily. MenG/UbiE family.

The catalysed reaction is a 2-demethylmenaquinol + S-adenosyl-L-methionine = a menaquinol + S-adenosyl-L-homocysteine + H(+). It catalyses the reaction a 2-methoxy-6-(all-trans-polyprenyl)benzene-1,4-diol + S-adenosyl-L-methionine = a 5-methoxy-2-methyl-3-(all-trans-polyprenyl)benzene-1,4-diol + S-adenosyl-L-homocysteine + H(+). It participates in quinol/quinone metabolism; menaquinone biosynthesis; menaquinol from 1,4-dihydroxy-2-naphthoate: step 2/2. Its pathway is cofactor biosynthesis; ubiquinone biosynthesis. Its function is as follows. Methyltransferase required for the conversion of demethylmenaquinol (DMKH2) to menaquinol (MKH2) and the conversion of 2-polyprenyl-6-methoxy-1,4-benzoquinol (DDMQH2) to 2-polyprenyl-3-methyl-6-methoxy-1,4-benzoquinol (DMQH2). This Shewanella oneidensis (strain ATCC 700550 / JCM 31522 / CIP 106686 / LMG 19005 / NCIMB 14063 / MR-1) protein is Ubiquinone/menaquinone biosynthesis C-methyltransferase UbiE.